A 55-amino-acid polypeptide reads, in one-letter code: Photosystem I reaction center subunit IX (55 aa).

The helical transmembrane segment at 7–27 threads the bilayer; it reads YLSVAPVLSTLWFGSLAGLLI.

Belongs to the PsaJ family.

It localises to the plastid. The protein resides in the chloroplast thylakoid membrane. Functionally, may help in the organization of the PsaE and PsaF subunits. This Gossypium barbadense (Sea Island cotton) protein is Photosystem I reaction center subunit IX.